The sequence spans 1235 residues: High-affinity potassium transport protein (1235 aa).

The residue at position 15 (S15) is a Phosphoserine. The next 2 helical transmembrane spans lie at 49 to 70 and 78 to 98; these read SFIA…ILLY and IDTL…TVDI. N-linked (GlcNAc...) asparagine glycosylation occurs at N100. The helical transmembrane segment at 107-127 threads the bilayer; the sequence is IVLYIVCCISTPIAVHSCLAF. 4 disordered regions span residues 161–310, 323–344, 361–441, and 488–565; these read LTAR…SPAD, EATA…GTRY, KIKI…TKPP, and RLST…HQLQ. Polar residues predominate over residues 164 to 179; the sequence is RTMTKNRTGTQRTSYP. The N-linked (GlcNAc...) asparagine glycan is linked to N169. A compositionally biased stretch (basic and acidic residues) spans 198–217; the sequence is VNRDEQDSVHSDQNSHDISR. Residues 219–232 show a composition bias toward low complexity; the sequence is SSNNNTNHNGSSGS. N-linked (GlcNAc...) asparagine glycosylation is found at N222 and N227. A compositionally biased stretch (acidic residues) spans 237–247; it reads VKEDETDDNGE. Positions 248–274 are enriched in polar residues; that stretch reads YQENNSYSTVGSSSNTVADESLNQKPK. N251 is a glycosylation site (N-linked (GlcNAc...) asparagine). N-linked (GlcNAc...) asparagine glycosylation is found at N369 and N383. Polar residues-rich tracts occupy residues 370 to 415 and 490 to 502; these read ESNT…SNSG and STGS…SNNV. S414 is subject to Phosphoserine. N-linked (GlcNAc...) asparagine glycans are attached at residues N497, N501, and N532. Residues 510-539 are compositionally biased toward acidic residues; sequence DMDDDDDDDDNDGDNNEEYFADNESGDEDE. S534 is subject to Phosphoserine. Residues 540-563 are compositionally biased toward basic and acidic residues; it reads RVQQSEPHSDSELKSHQQQQEKHQ. N-linked (GlcNAc...) asparagine glycans are attached at residues N580 and N677. The disordered stretch occupies residues 671–706; the sequence is HDGSHKNGSEEASSDSNENIYSTNGGSDHNGLNNYP. Over residues 680–706 the composition is skewed to polar residues; it reads EEASSDSNENIYSTNGGSDHNGLNNYP. 5 consecutive transmembrane segments (helical) span residues 778-800, 813-834, 838-858, 862-882, and 898-918; these read ILVV…WIIL, VSPT…GLTL, SMMS…FIII, GFPI…PDLS, and CFTL…LAGL. Residue N919 is glycosylated (N-linked (GlcNAc...) asparagine). The next 2 helical transmembrane spans lie at 923–943 and 971–991; these read WILF…SKGY and SIQV…AISI. The interval 1003–1063 is disordered; that stretch reads GLYGDMGGEP…KKKKKTENPN (61 aa). Residues 1010 to 1031 show a composition bias toward acidic residues; sequence GEPEDTDTEDDGNDEDDDEENE. A glycan (N-linked (GlcNAc...) asparagine) is linked at N1030. The segment covering 1036-1049 has biased composition (low complexity); sequence QSSQRSSSNNNNNN. Helical transmembrane passes span 1078-1098 and 1111-1131; these read QLSF…ICEG and IFAI…SLGY. An N-linked (GlcNAc...) asparagine glycan is attached at N1135.

This sequence belongs to the TrkH potassium transport family.

It is found in the membrane. Its function is as follows. This protein is required for high-affinity potassium transport. In Saccharomyces cerevisiae (strain ATCC 204508 / S288c) (Baker's yeast), this protein is High-affinity potassium transport protein (TRK1).